A 209-amino-acid polypeptide reads, in one-letter code: Uracil phosphoribosyltransferase (209 aa).

5-phospho-alpha-D-ribose 1-diphosphate is bound by residues Arg79, Arg104, and 131–139; that span reads DPMLATGGS. Uracil-binding positions include Ile194 and 199 to 201; that span reads GDA. Asp200 lines the 5-phospho-alpha-D-ribose 1-diphosphate pocket.

Belongs to the UPRTase family. Mg(2+) serves as cofactor.

It carries out the reaction UMP + diphosphate = 5-phospho-alpha-D-ribose 1-diphosphate + uracil. The protein operates within pyrimidine metabolism; UMP biosynthesis via salvage pathway; UMP from uracil: step 1/1. Allosterically activated by GTP. Catalyzes the conversion of uracil and 5-phospho-alpha-D-ribose 1-diphosphate (PRPP) to UMP and diphosphate. This is Uracil phosphoribosyltransferase from Streptococcus equi subsp. zooepidemicus (strain MGCS10565).